The primary structure comprises 220 residues: ATP synthase F(0) complex subunit a (220 aa).

6 helical membrane-spanning segments follow: residues 12–32 (PTLL…TLLP), 69–89 (WAMI…FTPT), 91–111 (QLSL…LLGL), 130–150 (LLIP…PFAL), 158–178 (LTAG…LLPM), and 183–203 (ALLT…VAMI).

Belongs to the ATPase A chain family. Component of the ATP synthase complex composed at least of ATP5F1A/subunit alpha, ATP5F1B/subunit beta, ATP5MC1/subunit c (homooctomer), MT-ATP6/subunit a, MT-ATP8/subunit 8, ATP5ME/subunit e, ATP5MF/subunit f, ATP5MG/subunit g, ATP5MK/subunit k, ATP5MJ/subunit j, ATP5F1C/subunit gamma, ATP5F1D/subunit delta, ATP5F1E/subunit epsilon, ATP5PF/subunit F6, ATP5PB/subunit b, ATP5PD/subunit d, ATP5PO/subunit OSCP. ATP synthase complex consists of a soluble F(1) head domain (subunits alpha(3) and beta(3)) - the catalytic core - and a membrane F(0) domain - the membrane proton channel (subunits c, a, 8, e, f, g, k and j). These two domains are linked by a central stalk (subunits gamma, delta, and epsilon) rotating inside the F1 region and a stationary peripheral stalk (subunits F6, b, d, and OSCP). Interacts with DNAJC30; interaction is direct.

The protein localises to the mitochondrion inner membrane. The enzyme catalyses H(+)(in) = H(+)(out). Functionally, subunit a, of the mitochondrial membrane ATP synthase complex (F(1)F(0) ATP synthase or Complex V) that produces ATP from ADP in the presence of a proton gradient across the membrane which is generated by electron transport complexes of the respiratory chain. ATP synthase complex consist of a soluble F(1) head domain - the catalytic core - and a membrane F(1) domain - the membrane proton channel. These two domains are linked by a central stalk rotating inside the F(1) region and a stationary peripheral stalk. During catalysis, ATP synthesis in the catalytic domain of F(1) is coupled via a rotary mechanism of the central stalk subunits to proton translocation. With the subunit c (ATP5MC1), forms the proton-conducting channel in the F(0) domain, that contains two crucial half-channels (inlet and outlet) that facilitate proton movement from the mitochondrial intermembrane space (IMS) into the matrix. Protons are taken up via the inlet half-channel and released through the outlet half-channel, following a Grotthuss mechanism. The chain is ATP synthase F(0) complex subunit a from Latimeria chalumnae (Coelacanth).